Here is a 305-residue protein sequence, read N- to C-terminus: GTPase Era (305 aa).

Residues 9–176 form the Era-type G domain; it reads KSGFISIIGR…LDTLPKYLPE (168 aa). Positions 17 to 24 are G1; sequence GRPNVGKS. Position 17-24 (17-24) interacts with GTP; sequence GRPNVGKS. The tract at residues 43–47 is G2; it reads QTTRN. The tract at residues 64–67 is G3; the sequence is DTPG. Residues 64-68 and 126-129 contribute to the GTP site; these read DTPGI and NKID. Positions 126 to 129 are G4; that stretch reads NKID. The G5 stretch occupies residues 155–157; it reads ISA. The 80-residue stretch at 207–286 folds into the KH type-2 domain; that stretch reads TREEIPHSIA…YLELWVKVQK (80 aa).

This sequence belongs to the TRAFAC class TrmE-Era-EngA-EngB-Septin-like GTPase superfamily. Era GTPase family. Monomer.

It is found in the cytoplasm. The protein localises to the cell membrane. Functionally, an essential GTPase that binds both GDP and GTP, with rapid nucleotide exchange. Plays a role in 16S rRNA processing and 30S ribosomal subunit biogenesis and possibly also in cell cycle regulation and energy metabolism. The chain is GTPase Era from Lysinibacillus sphaericus (strain C3-41).